The following is a 119-amino-acid chain: FAD-linked sulfhydryl oxidase (119 aa).

The region spanning 1–97 is the ERV/ALR sulfhydryl oxidase domain; sequence MLHWGPKFWR…ISWSEYKNIY (97 aa). Cys44 and Cys47 are joined by a disulfide.

It belongs to the asfivirus B119L family. In terms of assembly, interacts with A151R. It depends on FAD as a cofactor.

It localises to the host cytoplasm. The protein localises to the virion. It catalyses the reaction 2 R'C(R)SH + O2 = R'C(R)S-S(R)CR' + H2O2. FAD-dependent sulfhydryl oxidase that catalyzes the formation of disulfide bonds in viral proteins produced in the cell cytoplasm. Involved in virion maturation. The protein is FAD-linked sulfhydryl oxidase of Ornithodoros (relapsing fever ticks).